The following is a 21-amino-acid chain: FVLPFDVLDSGRDLDRGWPYA.

The protein belongs to the protease inhibitor I3 (leguminous Kunitz-type inhibitor) family. In terms of tissue distribution, tubers.

Its subcellular location is the vacuole. Its function is as follows. Inhibits trypsin and chymotrypsin (serine proteases). Does not inhibit elastase, subtilisin, cathepsin L nor papain (serine and cysteine proteases). Protects the plant by inhibiting proteases of invading organisms, decreasing both hyphal growth and zoospores germination of Phytophthora infestans. The chain is Serine protease inhibitor 3 from Solanum tuberosum (Potato).